The chain runs to 299 residues: KATNB1-like protein 1 (299 aa).

The Nuclear localization signal signature appears at 8-15; that stretch reads VKKRNFSN. Ser-56 bears the Phosphoserine mark.

As to quaternary structure, interacts with KATNA1 and KATNAL1; these interactions are competed by KATNB1 which has a higher affinity for them.

The protein localises to the nucleus. It is found in the cytoplasm. Its subcellular location is the cytoskeleton. It localises to the spindle pole. Its function is as follows. Regulates microtubule-severing activity of KATNAL1 in a concentration-dependent manner in vitro. The polypeptide is KATNB1-like protein 1 (Katnbl1) (Mus musculus (Mouse)).